The sequence spans 191 residues: Putative manganese efflux pump MntP (191 aa).

Transmembrane regions (helical) follow at residues 3 to 23 (PISI…AAIG), 37 to 57 (LRAG…GWLL), 65 to 85 (VEAF…IHMI), 107 to 129 (WKLA…GLAF), 144 to 164 (CTLT…SMVG), and 169 to 189 (IIGG…HLHG).

It belongs to the MntP (TC 9.B.29) family.

The protein resides in the cell inner membrane. Its function is as follows. Probably functions as a manganese efflux pump. The chain is Putative manganese efflux pump MntP from Stenotrophomonas maltophilia (strain K279a).